The following is a 127-amino-acid chain: Small ribosomal subunit protein uS13 (127 aa).

The interval 95–127 is disordered; the sequence is GLPLRGQRTKTNARTRRGKKGAAIGGKKKATKK.

This sequence belongs to the universal ribosomal protein uS13 family. Part of the 30S ribosomal subunit. Forms a loose heterodimer with protein S19. Forms two bridges to the 50S subunit in the 70S ribosome.

Functionally, located at the top of the head of the 30S subunit, it contacts several helices of the 16S rRNA. In the 70S ribosome it contacts the 23S rRNA (bridge B1a) and protein L5 of the 50S subunit (bridge B1b), connecting the 2 subunits; these bridges are implicated in subunit movement. Contacts the tRNAs in the A and P-sites. This chain is Small ribosomal subunit protein uS13, found in Herpetosiphon aurantiacus (strain ATCC 23779 / DSM 785 / 114-95).